Reading from the N-terminus, the 491-residue chain is Delayed-rectifier potassium channel regulatory subunit KCNS3 (491 aa).

Residues 1 to 182 (MVFGEFFHRP…IRMENPAYCL (182 aa)) lie on the Cytoplasmic side of the membrane. Residues 183 to 204 (SAKLIAISSLSVVLASIVAMCV) traverse the membrane as a helical segment. Residues 205–220 (HSMSEFQNEDGEVDDP) are Extracellular-facing. Residues 221 to 243 (VLEGVEIACIAWFTGELAVRLAA) form a helical membrane-spanning segment. At 244 to 254 (APCQKKFWKNP) the chain is on the cytoplasmic side. Residues 255 to 275 (LNIIDFVSIIPFYATLAVDTK) form a helical membrane-spanning segment. Residues 276–285 (EEESEDIENM) lie on the Extracellular side of the membrane. The chain crosses the membrane as a helical; Voltage-sensor span at residues 286–306 (GKVVQILRLMRIFRILKLARH). At 307–321 (SVGLRSLGATLRHSY) the chain is on the cytoplasmic side. A helical membrane pass occupies residues 322-343 (HEVGLLLLFLSVGISIFSVLIY). Topologically, residues 344–357 (SVEKDDHTSSLTSI) are extracellular. Residues 358–369 (PICWWWATISMT) constitute an intramembrane region (helical). The Selectivity filter signature appears at 370 to 375 (TVGYGD). Residues 370 to 377 (TVGYGDTH) lie within the membrane without spanning it. Residues 378–384 (PVTLAGK) lie on the Extracellular side of the membrane. The chain crosses the membrane as a helical span at residues 385–413 (LIASTCIICGILVVALPITIIFNKFSKYY). At 414 to 491 (QKQKDIDVDQ…TTSLENCTAK (78 aa)) the chain is on the cytoplasmic side.

This sequence belongs to the potassium channel family. S (TC 1.A.1.2) subfamily. Kv9.3/KCNS3 sub-subfamily. As to quaternary structure, heterotetramer with KCNB1. Does not form homomultimers. As to expression, detected in whole normal term placental and placental chorionic plate arteries and veins. Detected in syncytiotrophoblast and in blood vessel endothelium within intermediate villi and chorionic plate (at protein level). Detected in most tissues, but not in peripheral blood lymphocytes. The highest levels of expression are in lung.

Its subcellular location is the cell membrane. Functionally, potassium channel regulatory subunit that modulates the delayed rectifier potassium channel activity of KCNB1 by namely slowing down the deactivation and inactivation time constants. While it does not form functional channel on its own, it can form functional heterotetrameric channels with KCNB1. This Homo sapiens (Human) protein is Delayed-rectifier potassium channel regulatory subunit KCNS3.